The following is a 212-amino-acid chain: RNA chaperone ProQ (212 aa).

The interval 114–149 is disordered; that stretch reads RIAKAGKTSAPAANAKKPVKKPVARRPKAAPSAKPV. Positions 118–129 are enriched in low complexity; sequence AGKTSAPAANAK. Residues 130 to 141 are compositionally biased toward basic residues; sequence KPVKKPVARRPK.

Belongs to the ProQ family.

It localises to the cytoplasm. RNA chaperone with significant RNA binding, RNA strand exchange and RNA duplexing activities. The chain is RNA chaperone ProQ from Shewanella piezotolerans (strain WP3 / JCM 13877).